The sequence spans 152 residues: MKLLKVAAIAAIVFSGSALAGVVPQYGGGGGNHGGGGNNSGPNSELNIYQYGGGNSALALQADARNSDLTITQHGGGNGADVGQGSDDSSIDLTQRGFGNSATLDQWNGKDSHMTVKQFGGGNGAAVDQTASNSTVNVTQVGFGNNATAHQY.

The signal sequence occupies residues 1-20 (MKLLKVAAIAAIVFSGSALA).

It belongs to the CsgA/CsgB family.

The protein localises to the fimbrium. Functionally, curlin is the structural subunit of the curli. Curli are coiled surface structures that assemble preferentially at growth temperatures below 37 degrees Celsius. Curli can bind to fibronectin. The protein is Major curlin subunit (csgA) of Escherichia coli O157:H7.